Here is a 244-residue protein sequence, read N- to C-terminus: MHVPASLQQSSSSSSSCTEEENKHHMGIDVIIKVTKQDQTPTNDKICQSVTEITESESDPDPEVESEDDSTSVEDVDPPTTYYSIIGGGLRMNFGFTKCPQIKSISESADGNTVNARLSSVSPGQGKDSPAITHEEALAMIKDCEVSIDIRCSEEEKDSDIKTHPVLGSNISHKKVSYEDIIGSTIVDTKCVKNLEFSVRIGDMCKESSELEVKDGFKYVDGSASEGATDDTSLIDSTKLKACV.

The segment at 1–79 is disordered; sequence MHVPASLQQS…STSVEDVDPP (79 aa). Residues 37–53 are compositionally biased toward polar residues; that stretch reads QDQTPTNDKICQSVTEI. Acidic residues predominate over residues 54–77; sequence TESESDPDPEVESEDDSTSVEDVD.

This sequence belongs to the orthopoxvirus OPG001 family.

It is found in the host cytoplasm. The protein is truncated in this vaccinal strain and presumably inactive, because the lack of signal peptide prevents the protein of being secreted. In the wild-type viruses inhibits host immune defense by binding to host chemokines. Binds host CC chemokines (beta chemokines) such as RANTES with high affinity, but not CXC or C chemokines (alpha and gamma chemokines). This is Inactive chemokine-binding protein (OPG001) from Vaccinia virus (strain Western Reserve) (VACV).